The following is a 208-amino-acid chain: Large ribosomal subunit protein uL4 (208 aa).

It belongs to the universal ribosomal protein uL4 family. In terms of assembly, part of the 50S ribosomal subunit.

In terms of biological role, one of the primary rRNA binding proteins, this protein initially binds near the 5'-end of the 23S rRNA. It is important during the early stages of 50S assembly. It makes multiple contacts with different domains of the 23S rRNA in the assembled 50S subunit and ribosome. Its function is as follows. Forms part of the polypeptide exit tunnel. The protein is Large ribosomal subunit protein uL4 of Solibacter usitatus (strain Ellin6076).